The chain runs to 589 residues: UvrABC system protein C (589 aa).

In terms of domain architecture, GIY-YIG spans histidine 14–methionine 91.

The protein belongs to the UvrC family. Interacts with UvrB in an incision complex.

The protein localises to the cytoplasm. Functionally, the UvrABC repair system catalyzes the recognition and processing of DNA lesions. UvrC both incises the 5' and 3' sides of the lesion. The N-terminal half is responsible for the 3' incision and the C-terminal half is responsible for the 5' incision. The sequence is that of UvrABC system protein C from Malacoplasma penetrans (strain HF-2) (Mycoplasma penetrans).